Here is a 447-residue protein sequence, read N- to C-terminus: Phosphoglucosamine mutase (447 aa).

The Phosphoserine intermediate role is filled by S108. Mg(2+) contacts are provided by S108, D247, D249, and D251. S108 is subject to Phosphoserine.

The protein belongs to the phosphohexose mutase family. It depends on Mg(2+) as a cofactor. Post-translationally, activated by phosphorylation.

It catalyses the reaction alpha-D-glucosamine 1-phosphate = D-glucosamine 6-phosphate. Catalyzes the conversion of glucosamine-6-phosphate to glucosamine-1-phosphate. The sequence is that of Phosphoglucosamine mutase from Bordetella petrii (strain ATCC BAA-461 / DSM 12804 / CCUG 43448).